Reading from the N-terminus, the 103-residue chain is PTS system oligo-beta-mannoside-specific EIIB component (103 aa).

The region spanning 1 to 103 (MKKILLACSS…EQALSLMVNQ (103 aa)) is the PTS EIIB type-3 domain. Residue cysteine 8 is the Phosphocysteine intermediate of the active site. At cysteine 8 the chain carries Phosphocysteine; by EIIA.

Its subcellular location is the cytoplasm. It catalyses the reaction D-cellobiose(out) + N(pros)-phospho-L-histidyl-[protein] = 6-phospho-beta-D-glucosyl-(1-&gt;4)-D-glucose(in) + L-histidyl-[protein]. In terms of biological role, the phosphoenolpyruvate-dependent sugar phosphotransferase system (sugar PTS), a major carbohydrate active transport system, catalyzes the phosphorylation of incoming sugar substrates concomitantly with their translocation across the cell membrane. The enzyme II GmuABC PTS system is involved in the transport of oligo-glucomannans such as cellobiose or mannobiose. This Bacillus subtilis (strain 168) protein is PTS system oligo-beta-mannoside-specific EIIB component.